A 178-amino-acid chain; its full sequence is MAKHKQEEHPEDVEVKEEAVETAEQAESASPEKSELELANERAEDFENKYLRAHAEMQNIQRRANEERQQLQRYRSQDLAKAILPSIDNLERALAVEGLTDDVKKGLEMVQESLIHALKEEGIEEIPADGAFDHNYHMAIQTVPADDEHPADTIAQVFQKGYKLHDRILRPAMVVVYN.

2 stretches are compositionally biased toward basic and acidic residues: residues 1–19 (MAKH…KEEA) and 30–42 (SPEK…ANER). Positions 1 to 42 (MAKHKQEEHPEDVEVKEEAVETAEQAESASPEKSELELANER) are disordered.

The protein belongs to the GrpE family. In terms of assembly, homodimer.

It is found in the cytoplasm. Its function is as follows. Participates actively in the response to hyperosmotic and heat shock by preventing the aggregation of stress-denatured proteins, in association with DnaK and GrpE. It is the nucleotide exchange factor for DnaK and may function as a thermosensor. Unfolded proteins bind initially to DnaJ; upon interaction with the DnaJ-bound protein, DnaK hydrolyzes its bound ATP, resulting in the formation of a stable complex. GrpE releases ADP from DnaK; ATP binding to DnaK triggers the release of the substrate protein, thus completing the reaction cycle. Several rounds of ATP-dependent interactions between DnaJ, DnaK and GrpE are required for fully efficient folding. In Streptococcus sanguinis (strain SK36), this protein is Protein GrpE.